Consider the following 308-residue polypeptide: Aspartate carbamoyltransferase catalytic subunit (308 aa).

The carbamoyl phosphate site is built by Arg-58 and Thr-59. Lys-86 lines the L-aspartate pocket. Residues Arg-108, His-136, and Gln-139 each coordinate carbamoyl phosphate. The L-aspartate site is built by Arg-169 and Arg-227. Positions 268 and 269 each coordinate carbamoyl phosphate.

The protein belongs to the aspartate/ornithine carbamoyltransferase superfamily. ATCase family. Heterododecamer (2C3:3R2) of six catalytic PyrB chains organized as two trimers (C3), and six regulatory PyrI chains organized as three dimers (R2).

The catalysed reaction is carbamoyl phosphate + L-aspartate = N-carbamoyl-L-aspartate + phosphate + H(+). The protein operates within pyrimidine metabolism; UMP biosynthesis via de novo pathway; (S)-dihydroorotate from bicarbonate: step 2/3. Its function is as follows. Catalyzes the condensation of carbamoyl phosphate and aspartate to form carbamoyl aspartate and inorganic phosphate, the committed step in the de novo pyrimidine nucleotide biosynthesis pathway. In Chloroflexus aurantiacus (strain ATCC 29366 / DSM 635 / J-10-fl), this protein is Aspartate carbamoyltransferase catalytic subunit.